Reading from the N-terminus, the 925-residue chain is Bifunctional glutamine synthetase adenylyltransferase/adenylyl-removing enzyme (925 aa).

The adenylyl removase stretch occupies residues 1 to 426; sequence MTDASDLLSL…AQFDQVFADK (426 aa). An adenylyl transferase region spans residues 436–925; the sequence is DQAAGCIWSG…AALWARVFGA (490 aa).

The protein belongs to the GlnE family. Requires Mg(2+) as cofactor.

The catalysed reaction is [glutamine synthetase]-O(4)-(5'-adenylyl)-L-tyrosine + phosphate = [glutamine synthetase]-L-tyrosine + ADP. It carries out the reaction [glutamine synthetase]-L-tyrosine + ATP = [glutamine synthetase]-O(4)-(5'-adenylyl)-L-tyrosine + diphosphate. Functionally, involved in the regulation of glutamine synthetase GlnA, a key enzyme in the process to assimilate ammonia. When cellular nitrogen levels are high, the C-terminal adenylyl transferase (AT) inactivates GlnA by covalent transfer of an adenylyl group from ATP to specific tyrosine residue of GlnA, thus reducing its activity. Conversely, when nitrogen levels are low, the N-terminal adenylyl removase (AR) activates GlnA by removing the adenylyl group by phosphorolysis, increasing its activity. The regulatory region of GlnE binds the signal transduction protein PII (GlnB) which indicates the nitrogen status of the cell. The chain is Bifunctional glutamine synthetase adenylyltransferase/adenylyl-removing enzyme from Burkholderia mallei (strain ATCC 23344).